Consider the following 281-residue polypeptide: Ribulose-5-phosphate-3-epimerase, chloroplastic (281 aa).

A chloroplast-targeting transit peptide spans 1 to 45 (MSTSAASLCCSSTQVNGFGLRPERSLLYQPTSFSFSRRRTHGIVK). S63 is a binding site for substrate. H88, D90, and H121 together coordinate a divalent metal cation. D90 serves as the catalytic Proton acceptor. Substrate is bound by residues H121, 199 to 202 (GFGG), 232 to 234 (DGG), and 254 to 256 (GSA). A divalent metal cation is bound at residue D232. D232 functions as the Proton donor in the catalytic mechanism.

This sequence belongs to the ribulose-phosphate 3-epimerase family. Homooctamer. The cofactor is Co(2+). Fe(2+) is required as a cofactor. Mn(2+) serves as cofactor. It depends on Zn(2+) as a cofactor. As to expression, present in roots, seeds and flowers. Accumulates in nematode feeding sites (NFS).

It localises to the plastid. The protein resides in the chloroplast thylakoid membrane. It catalyses the reaction D-ribulose 5-phosphate = D-xylulose 5-phosphate. The protein operates within carbohydrate biosynthesis; Calvin cycle. Functionally, essential protein required during embryogenesis. Catalyzes the reversible epimerization of D-ribulose 5-phosphate to D-xylulose 5-phosphate. Essential for the early steps of nematode feeding sites (NFS, multinucleated root cells) formation induced by the root-knot nematodes Heterodera schachtii, Meloidogyne incognita, M.javanica and M.hapla. The chain is Ribulose-5-phosphate-3-epimerase, chloroplastic from Arabidopsis thaliana (Mouse-ear cress).